A 290-amino-acid chain; its full sequence is Ribosomal RNA small subunit methyltransferase A (290 aa).

Asn27, Leu29, Gly54, Glu75, Asp100, and Asn125 together coordinate S-adenosyl-L-methionine.

It belongs to the class I-like SAM-binding methyltransferase superfamily. rRNA adenine N(6)-methyltransferase family. RsmA subfamily.

It is found in the cytoplasm. The enzyme catalyses adenosine(1518)/adenosine(1519) in 16S rRNA + 4 S-adenosyl-L-methionine = N(6)-dimethyladenosine(1518)/N(6)-dimethyladenosine(1519) in 16S rRNA + 4 S-adenosyl-L-homocysteine + 4 H(+). Specifically dimethylates two adjacent adenosines (A1518 and A1519) in the loop of a conserved hairpin near the 3'-end of 16S rRNA in the 30S particle. May play a critical role in biogenesis of 30S subunits. The polypeptide is Ribosomal RNA small subunit methyltransferase A (Streptococcus pyogenes serotype M5 (strain Manfredo)).